The primary structure comprises 447 residues: uncharacterized protein (447 aa).

Disordered stretches follow at residues 1-80 (MTFE…EQSS), 115-184 (ATTQ…PNNP), and 295-322 (LQDN…SSGI). Residues 11–32 (QRRDESAYRLGEEDGRQKGESS) are compositionally biased toward basic and acidic residues. Residues 42–51 (KNPSNVSFWS) are compositionally biased toward polar residues. The segment covering 61–72 (VKTDRPQFHRAD) has biased composition (basic and acidic residues). Over residues 115 to 158 (ATTQSSPISTSFNPQLPSNSNTNRFDFGSESQLSSNYTNDTGLS) the composition is skewed to polar residues. A compositionally biased stretch (low complexity) spans 300 to 321 (SLTSQGSNLSSQNSGLSSSSSG). 2 helical membrane passes run 385–405 (FMFL…ASFL) and 424–444 (IINR…IGLG).

The protein resides in the membrane. This is an uncharacterized protein from Schizosaccharomyces pombe (strain 972 / ATCC 24843) (Fission yeast).